Here is a 211-residue protein sequence, read N- to C-terminus: Protein-methionine-sulfoxide reductase heme-binding subunit MsrQ (211 aa).

Transmembrane regions (helical) follow at residues 8 to 28 (VIWL…WLVW), 54 to 74 (FLLA…PLLI), 82 to 102 (LWCF…ELGV), 116 to 136 (PYLT…FTST), and 153 to 173 (FVYL…KIIS).

This sequence belongs to the MsrQ family. In terms of assembly, heterodimer of a catalytic subunit (MsrP) and a heme-binding subunit (MsrQ). The cofactor is FMN. Requires heme b as cofactor.

The protein resides in the cell inner membrane. In terms of biological role, part of the MsrPQ system that repairs oxidized periplasmic proteins containing methionine sulfoxide residues (Met-O), using respiratory chain electrons. Thus protects these proteins from oxidative-stress damage caused by reactive species of oxygen and chlorine generated by the host defense mechanisms. MsrPQ is essential for the maintenance of envelope integrity under bleach stress, rescuing a wide series of structurally unrelated periplasmic proteins from methionine oxidation, including the primary periplasmic chaperone SurA and the lipoprotein Pal. MsrQ provides electrons for reduction to the reductase catalytic subunit MsrP, using the quinone pool of the respiratory chain. The sequence is that of Protein-methionine-sulfoxide reductase heme-binding subunit MsrQ from Escherichia coli O6:K15:H31 (strain 536 / UPEC).